Reading from the N-terminus, the 371-residue chain is DNA repair and recombination protein rti1 (371 aa).

The interval 346-371 (IDHNRSMPIRRPSLTSNNSANTFSTK) is disordered. The span at 358–371 (SLTSNNSANTFSTK) shows a compositional bias: polar residues.

The protein belongs to the RAD52 family. In terms of assembly, interacts with rph51 and rph54.

Its function is as follows. Active in the repair of DNA damage and in mating-type switching. Probably involved in the repair of DNA double-strands breaks. Has a role in promoting S phase completion. The protein is DNA repair and recombination protein rti1 (rti1) of Schizosaccharomyces pombe (strain 972 / ATCC 24843) (Fission yeast).